We begin with the raw amino-acid sequence, 65 residues long: Putative antitoxin PF2058 (65 aa).

Belongs to the UPF0165 family.

In terms of biological role, possibly the antitoxin component of a type II toxin-antitoxin (TA) system. In Pyrococcus furiosus (strain ATCC 43587 / DSM 3638 / JCM 8422 / Vc1), this protein is Putative antitoxin PF2058.